Here is a 305-residue protein sequence, read N- to C-terminus: Probable lipid kinase YegS-like (305 aa).

A DAGKc domain is found at 1 to 129 (MSERKALLIL…IDLGEVGGQI (129 aa)). ATP contacts are provided by residues Thr-39, 65–71 (GDGTLRD), and Thr-92. Leu-210, Asp-213, and Leu-215 together coordinate Mg(2+). Glu-268 functions as the Proton acceptor in the catalytic mechanism.

It belongs to the diacylglycerol/lipid kinase family. YegS lipid kinase subfamily. Mg(2+) serves as cofactor. It depends on Ca(2+) as a cofactor.

The protein resides in the cytoplasm. Probably phosphorylates lipids; the in vivo substrate is unknown. The chain is Probable lipid kinase YegS-like from Pseudomonas fluorescens (strain Pf0-1).